A 1142-amino-acid chain; its full sequence is MGDKDMPTAGMPSLLQSSSESPQSCPEGEDSQSPLQIPQSSPESDDTLYPLQSPQSRSEGEDSSDPLQRPPEGKDSQSPLQIPQSSPEGDDTQSPLQNSQSSPEGKDSLSPLEISQSPPEGEDVQSPLQNPASSFFSSALLSIFQSSPESTQSPFEGFPQSVLQIPVSAASSSTLVSIFQSSPESTQSPFEGFPQSPLQIPVSRSFSSTLLSIFQSSPERTQSTFEGFAQSPLQIPVSPSSSSTLLSLFQSFSERTQSTFEGFAQSSLQIPVSPSFSSTLVSLFQSSPERTQSTFEGFPQSPLQIPVSSSSSSTLLSLFQSSPERTHSTFEGFPQSLLQIPMTSSFSSTLLSIFQSSPESAQSTFEGFPQSPLQIPGSPSFSSTLLSLFQSSPERTHSTFEGFPQSPLQIPMTSSFSSTLLSILQSSPESAQSAFEGFPQSPLQIPVSSSFSYTLLSLFQSSPERTHSTFEGFPQSPLQIPVSSSSSSSTLLSLFQSSPECTQSTFEGFPQSPLQIPQSPPEGENTHSPLQIVPSLPEWEDSLSPHYFPQSPPQGEDSLSPHYFPQSPPQGEDSLSPHYFPQSPQGEDSLSPHYFPQSPPQGEDSMSPLYFPQSPLQGEEFQSSLQSPVSICSSSTPSSLPQSFPESSQSPPEGPVQSPLHSPQSPPEGMHSQSPLQSPESAPEGEDSLSPLQIPQSPLEGEDSLSSLHFPQSPPEWEDSLSPLHFPQFPPQGEDFQSSLQSPVSICSSSTSLSLPQSFPESPQSPPEGPAQSPLQRPVSSFFSYTLASLLQSSHESPQSPPEGPAQSPLQSPVSSFPSSTSSSLSQSSPVSSFPSSTSSSLSKSSPESPLQSPVISFSSSTSLSPFSEESSSPVDEYTSSSDTLLESDSLTDSESLIESEPLFTYTLDEKVDELARFLLLKYQVKQPITKAEMLTNVISRYTGYFPVIFRKAREFIEILFGISLREVDPDDSYVFVNTLDLTSEGCLSDEQGMSQNRLLILILSIIFIKGTYASEEVIWDVLSGIGVRAGREHFAFGEPRELLTKVWVQEHYLEYREVPNSSPPRYEFLWGPRAHSEVIKRKVVEFLAMLKNTVPITFPSSYKDALKDVEERAQAIIDTTDDSTATESASSSVMSPSFSSE.

Residues 1 to 132 (MGDKDMPTAG…DVQSPLQNPA (132 aa)) are disordered. Positions 13–42 (SLLQSSSESPQSCPEGEDSQSPLQIPQSSP) are enriched in low complexity. Phosphoserine is present on Ser-63. Residues 76-87 (SQSPLQIPQSSP) are compositionally biased toward low complexity. The span at 92 to 103 (TQSPLQNSQSSP) shows a compositional bias: polar residues. Residues Ser-207 and Ser-382 each carry the phosphoserine modification. Disordered regions lie at residues 502–778 (TQST…LQRP) and 791–893 (LQSS…SLTD). A compositionally biased stretch (polar residues) spans 614-626 (SPLQGEEFQSSLQ). The segment covering 627–659 (SPVSICSSSTPSSLPQSFPESSQSPPEGPVQSP) has biased composition (low complexity). Polar residues predominate over residues 671–680 (HSQSPLQSPE). 2 stretches are compositionally biased toward low complexity: residues 741 to 762 (QSPV…FPES) and 807 to 889 (QSPL…LESD). An MAGE domain is found at 908–1106 (LDEKVDELAR…ITFPSSYKDA (199 aa)). Phosphoserine is present on Ser-1063. The interval 1118–1142 (IDTTDDSTATESASSSVMSPSFSSE) is disordered. Residues 1123–1142 (DSTATESASSSVMSPSFSSE) show a composition bias toward low complexity.

In terms of tissue distribution, expressed in testis and in tumors of a wide variety of histologic types.

It localises to the cytoplasm. The polypeptide is Melanoma-associated antigen C1 (MAGEC1) (Homo sapiens (Human)).